We begin with the raw amino-acid sequence, 502 residues long: MFS-type transporeter aprT (502 aa).

Positions 1-38 (MASPELASHHSDPSDGEGAPFLPGVDDESPESLNSDIP) are disordered. 11 consecutive transmembrane segments (helical) span residues 45-65 (HGLI…GPMI), 114-136 (IGYR…GLLA), 150-170 (VGFV…NIFP), 175-195 (WFGA…ALFW), 214-234 (FGIA…FVMK), 239-259 (VPLM…NLLP), 302-322 (VAVI…AFLV), 336-356 (ATLL…FILP), 380-400 (VMLL…NTLI), 403-423 (LLLH…ITGL), and 464-484 (LWIG…ALVL). Asn-495 is a glycosylation site (N-linked (GlcNAc...) asparagine).

It belongs to the major facilitator superfamily.

It is found in the cell membrane. Its function is as follows. MFS-rype transporer; part of the gene cluster that mediates the biosynthesis of the asperipin-2a, a bicyclic peptide that possesses two macrocyclic ether rings consisting of 14- and 17-membered paracyclophans. AprT is likely to be involved in the cellular export of asperipin-2a. The protein is MFS-type transporeter aprT of Aspergillus flavus (strain ATCC 200026 / FGSC A1120 / IAM 13836 / NRRL 3357 / JCM 12722 / SRRC 167).